The following is a 234-amino-acid chain: MNYINLPTVLPGSPSKTRGQIQVILGPMFSGKSTELMRRVRRFQIAQNKCLVIKYAKDTRYSSSFSTHDRNTMDALPACLLRDVAQEALGAAVIGIDEGQFFPDIVEFCEVMANAGKTVIVAALDGTFQRKAFGSILNLVPLAESVVKLTAVCMECFREAAYTKRLGLEKEVEVIGGADKYHSVCRVCYFKKSSVQPAGPDNKENCPVLGQPGEASAVRKLFAPQQVLQHNSTN.

Ser-13 is subject to Phosphoserine. ATP contacts are provided by residues 26–33, 58–60, and 97–100; these read GPMFSGKS, DTR, and DEGQ. The active-site Proton acceptor is the Glu-98. Residue Phe-128 coordinates substrate. Zn(2+) contacts are provided by Cys-153 and Cys-156. Residues 172 to 176 and Tyr-181 contribute to the substrate site; that span reads VEVIG. Positions 185 and 188 each coordinate Zn(2+). Positions 203–205 match the KEN box motif; that stretch reads KEN.

This sequence belongs to the thymidine kinase family. Homotetramer. Tetramerization from dimerization is induced by ATP and increases catalytic efficiency due to a high affinity for thymidine. Tetramerization is inhibited by phosphorylation at Ser-13. Interacts (via the KEN box) with FZR1. In terms of processing, phosphorylated on Ser-13 in mitosis. Phosphorylation of Ser-13 by CDK1 during mitosis reduces homotetramerization and catalytic efficiency when DNA replication is complete and intracellular TK1 is still present at a high level. Post-translationally, polyubiquitinated. Postmitosis, ubiquitination leads to proteasomal degradation. The KEN box sequence located at the C-terminal region targets for degradation by the anaphase promoting complex (APC/C) activated and rate-limited by FZR1.

The protein localises to the cytoplasm. It carries out the reaction thymidine + ATP = dTMP + ADP + H(+). Its function is as follows. Cell-cycle-regulated enzyme of importance in nucleotide metabolism. Catalyzes the first enzymatic step in the salvage pathway converting thymidine into thymidine monophosphate. Transcriptional regulation limits expression to the S phase of the cell cycle and transient expression coincides with the oscillation in the intracellular dTTP concentration. The protein is Thymidine kinase, cytosolic (TK1) of Cricetulus griseus (Chinese hamster).